Reading from the N-terminus, the 451-residue chain is tRNA modification GTPase MnmE (451 aa).

The (6S)-5-formyl-5,6,7,8-tetrahydrofolate site is built by R23, E80, and K119. In terms of domain architecture, TrmE-type G spans 215–372 (GIKVVLTGQP…LRTVLLKTVG (158 aa)). K(+) is bound at residue N225. Residues 225-230 (NVGKSS), 244-250 (TEIPGTT), and 269-272 (DTAG) contribute to the GTP site. Residue S229 coordinates Mg(2+). The K(+) site is built by T244, I246, and T249. T250 is a Mg(2+) binding site. (6S)-5-formyl-5,6,7,8-tetrahydrofolate is bound at residue K451.

It belongs to the TRAFAC class TrmE-Era-EngA-EngB-Septin-like GTPase superfamily. TrmE GTPase family. In terms of assembly, homodimer. Heterotetramer of two MnmE and two MnmG subunits. Requires K(+) as cofactor.

The protein resides in the cytoplasm. Its function is as follows. Exhibits a very high intrinsic GTPase hydrolysis rate. Involved in the addition of a carboxymethylaminomethyl (cmnm) group at the wobble position (U34) of certain tRNAs, forming tRNA-cmnm(5)s(2)U34. This chain is tRNA modification GTPase MnmE, found in Nitrosomonas eutropha (strain DSM 101675 / C91 / Nm57).